Reading from the N-terminus, the 155-residue chain is Endoribonuclease YbeY (155 aa).

3 residues coordinate Zn(2+): His-120, His-124, and His-130.

This sequence belongs to the endoribonuclease YbeY family. Requires Zn(2+) as cofactor.

The protein resides in the cytoplasm. Single strand-specific metallo-endoribonuclease involved in late-stage 70S ribosome quality control and in maturation of the 3' terminus of the 16S rRNA. This Staphylococcus epidermidis (strain ATCC 12228 / FDA PCI 1200) protein is Endoribonuclease YbeY.